A 154-amino-acid polypeptide reads, in one-letter code: SsrA-binding protein (154 aa).

The span at 123-142 shows a compositional bias: basic and acidic residues; the sequence is AEHDKRHTIKDRDWQREQGR. The segment at 123-154 is disordered; it reads AEHDKRHTIKDRDWQREQGRLMRHKVSAPHKD. Residues 143–154 show a composition bias toward basic residues; it reads LMRHKVSAPHKD.

Belongs to the SmpB family.

The protein resides in the cytoplasm. Functionally, required for rescue of stalled ribosomes mediated by trans-translation. Binds to transfer-messenger RNA (tmRNA), required for stable association of tmRNA with ribosomes. tmRNA and SmpB together mimic tRNA shape, replacing the anticodon stem-loop with SmpB. tmRNA is encoded by the ssrA gene; the 2 termini fold to resemble tRNA(Ala) and it encodes a 'tag peptide', a short internal open reading frame. During trans-translation Ala-aminoacylated tmRNA acts like a tRNA, entering the A-site of stalled ribosomes, displacing the stalled mRNA. The ribosome then switches to translate the ORF on the tmRNA; the nascent peptide is terminated with the 'tag peptide' encoded by the tmRNA and targeted for degradation. The ribosome is freed to recommence translation, which seems to be the essential function of trans-translation. In Leptothrix cholodnii (strain ATCC 51168 / LMG 8142 / SP-6) (Leptothrix discophora (strain SP-6)), this protein is SsrA-binding protein.